We begin with the raw amino-acid sequence, 460 residues long: A-type ATP synthase subunit B (460 aa).

Belongs to the ATPase alpha/beta chains family. As to quaternary structure, has multiple subunits with at least A(3), B(3), C, D, E, F, H, I and proteolipid K(x).

The protein localises to the cell membrane. Functionally, component of the A-type ATP synthase that produces ATP from ADP in the presence of a proton gradient across the membrane. The B chain is a regulatory subunit. The protein is A-type ATP synthase subunit B of Thermoplasma acidophilum (strain ATCC 25905 / DSM 1728 / JCM 9062 / NBRC 15155 / AMRC-C165).